An 867-amino-acid polypeptide reads, in one-letter code: Probable alpha,alpha-trehalose-phosphate synthase [UDP-forming] 9 (867 aa).

Ser5 carries the post-translational modification Phosphoserine. Thr32 is subject to Phosphothreonine. The segment at 59–546 (ERKIIVANML…AKSFMQDLER (488 aa)) is glycosyltransferase.

This sequence in the N-terminal section; belongs to the glycosyltransferase 20 family. In the C-terminal section; belongs to the trehalose phosphatase family.

The catalysed reaction is D-glucose 6-phosphate + UDP-alpha-D-glucose = alpha,alpha-trehalose 6-phosphate + UDP + H(+). The polypeptide is Probable alpha,alpha-trehalose-phosphate synthase [UDP-forming] 9 (TPS9) (Arabidopsis thaliana (Mouse-ear cress)).